A 335-amino-acid polypeptide reads, in one-letter code: Probable cyclin-H (335 aa).

It belongs to the cyclin family. Cyclin C subfamily.

The protein resides in the nucleus. In terms of biological role, regulates CDK7, the catalytic subunit of the CDK-activating kinase (CAK) enzymatic complex. This Echinococcus multilocularis (Fox tapeworm) protein is Probable cyclin-H (CYCH).